Here is a 362-residue protein sequence, read N- to C-terminus: Cytochrome c oxidase subunit 2 (362 aa).

The N-terminal stretch at 1 to 28 (MEQQEKRGTVRKALLGSVIGFGGLALAG) is a signal peptide. The N-palmitoyl cysteine moiety is linked to residue cysteine 29. Cysteine 29 is lipidated: S-diacylglycerol cysteine. Helical transmembrane passes span 60-80 (FWVW…GLFI) and 107-127 (IPLE…LFFF). The segment at 171-206 (SDYVGTDEKRQEAAEKTKFDQGGDNPNPINGRSKTD) is disordered. Positions 176–191 (TDEKRQEAAEKTKFDQ) are enriched in basic and acidic residues. A compositionally biased stretch (polar residues) spans 197 to 206 (NPINGRSKTD). Residues histidine 246, cysteine 287, glutamate 289, cysteine 291, histidine 295, and methionine 298 each coordinate Cu cation. Residues 325–362 (NSDALKSIGEAPYATSTHPFNSERATRDGANFDDTAAA) form a disordered region.

This sequence belongs to the cytochrome c oxidase subunit 2 family. In terms of assembly, associates with subunits I, III and IV to form cytochrome c oxidase. Requires binuclear copper center (CuA) as cofactor.

The protein localises to the cell membrane. The catalysed reaction is 4 Fe(II)-[cytochrome c] + O2 + 8 H(+)(in) = 4 Fe(III)-[cytochrome c] + 2 H2O + 4 H(+)(out). Functionally, subunits I and II form the functional core of the enzyme complex. Electrons originating in cytochrome c are transferred via heme a and Cu(A) to the binuclear center formed by heme a3 and Cu(B). In Corynebacterium diphtheriae (strain ATCC 700971 / NCTC 13129 / Biotype gravis), this protein is Cytochrome c oxidase subunit 2 (ctaC).